The primary structure comprises 255 residues: 1-(5-phosphoribosyl)-5-[(5-phosphoribosylamino)methylideneamino] imidazole-4-carboxamide isomerase (255 aa).

Asp12 serves as the catalytic Proton acceptor. The active-site Proton donor is the Asp131.

It belongs to the HisA/HisF family.

The protein resides in the cytoplasm. The enzyme catalyses 1-(5-phospho-beta-D-ribosyl)-5-[(5-phospho-beta-D-ribosylamino)methylideneamino]imidazole-4-carboxamide = 5-[(5-phospho-1-deoxy-D-ribulos-1-ylimino)methylamino]-1-(5-phospho-beta-D-ribosyl)imidazole-4-carboxamide. The protein operates within amino-acid biosynthesis; L-histidine biosynthesis; L-histidine from 5-phospho-alpha-D-ribose 1-diphosphate: step 4/9. The sequence is that of 1-(5-phosphoribosyl)-5-[(5-phosphoribosylamino)methylideneamino] imidazole-4-carboxamide isomerase from Cutibacterium acnes (strain DSM 16379 / KPA171202) (Propionibacterium acnes).